We begin with the raw amino-acid sequence, 477 residues long: MSPEDPQETQPLLRPPEARTPRGRRVFLASFAAALGPLSFGFALGYSSPAIPSLRRTAPPALRLGDNAASWFGAVVTLGAAAGGILGGWLLDRAGRKLSLLLCTVPFVTGFAVITAARDVWMLLGGRLLTGLACGVASLVAPVYISEIAYPAVRGLLGSCVQLMVVTGILLAYVAGWVLEWRWLAVLGCVPPTLMLLLMCYMPETPRFLLTQHQYQEAMAALRFLWGSEEGWEEPPVGAEHQGFQLALLRRPGIYKPLIIGISLMVFQQLSGVNAIMFYANSIFEEAKFKDSSLASVTVGIIQVLFTAVAALIMDRAGRRLLLALSGVIMVFSMSAFGTYFKLTQSLPSNSSHVGLVPIAAEPVDVQVGLAWLAVGSMCLFIAGFAVGWGPIPWLLMSEIFPLHVKGVATGICVLTNWFMAFLVTKEFSSVMEMLRPYGAFWLTAAFCALSVLFTLTVVPETKGRTLEQVTAHFEGR.

At 1–25 (MSPEDPQETQPLLRPPEARTPRGRR) the chain is on the cytoplasmic side. Positions 12–13 (LL) match the Dileucine internalization motif motif. A helical membrane pass occupies residues 26–46 (VFLASFAAALGPLSFGFALGY). Topologically, residues 47 to 70 (SSPAIPSLRRTAPPALRLGDNAAS) are extracellular. Residues 71-91 (WFGAVVTLGAAAGGILGGWLL) traverse the membrane as a helical segment. Over 92–96 (DRAGR) the chain is Cytoplasmic. The chain crosses the membrane as a helical span at residues 97-117 (KLSLLLCTVPFVTGFAVITAA). The Extracellular segment spans residues 118–127 (RDVWMLLGGR). Residues 128 to 148 (LLTGLACGVASLVAPVYISEI) form a helical membrane-spanning segment. At 149–156 (AYPAVRGL) the chain is on the cytoplasmic side. A helical membrane pass occupies residues 157–177 (LGSCVQLMVVTGILLAYVAGW). Residue Q162 coordinates D-glucose. The Extracellular segment spans residues 178-182 (VLEWR). A helical transmembrane segment spans residues 183 to 203 (WLAVLGCVPPTLMLLLMCYMP). Over 204 to 257 (ETPRFLLTQHQYQEAMAALRFLWGSEEGWEEPPVGAEHQGFQLALLRRPGIYKP) the chain is Cytoplasmic. Residues 258-278 (LIIGISLMVFQQLSGVNAIMF) traverse the membrane as a helical segment. D-glucose contacts are provided by residues 268-269 (QQ) and N274. Residues 279-293 (YANSIFEEAKFKDSS) lie on the Extracellular side of the membrane. Residues 294-314 (LASVTVGIIQVLFTAVAALIM) traverse the membrane as a helical segment. Topologically, residues 315–320 (DRAGRR) are cytoplasmic. A helical membrane pass occupies residues 321 to 341 (LLLALSGVIMVFSMSAFGTYF). Topologically, residues 342-367 (KLTQSLPSNSSHVGLVPIAAEPVDVQ) are extracellular. An N-linked (GlcNAc...) asparagine glycan is attached at N350. A helical transmembrane segment spans residues 368 to 388 (VGLAWLAVGSMCLFIAGFAVG). Residues 389–404 (WGPIPWLLMSEIFPLH) lie on the Cytoplasmic side of the membrane. W394 contacts D-glucose. Residues 405–425 (VKGVATGICVLTNWFMAFLVT) traverse the membrane as a helical segment. At 426 to 438 (KEFSSVMEMLRPY) the chain is on the extracellular side. A helical membrane pass occupies residues 439–459 (GAFWLTAAFCALSVLFTLTVV). Residues 460–477 (PETKGRTLEQVTAHFEGR) lie on the Cytoplasmic side of the membrane.

It belongs to the major facilitator superfamily. Sugar transporter (TC 2.A.1.1) family. Glucose transporter subfamily. Interacts with AP2B1. Also able to mediate the transport of dehydroascorbate. In terms of tissue distribution, highest level of expression in placenta and testis. Highly expressed in adult and pubertal testis, but not prepubertal testis. Lower levels of expression in brain, liver, heart, kidney, fat and skeletal muscle.

Its subcellular location is the cell membrane. It localises to the cytoplasmic vesicle membrane. The enzyme catalyses D-glucose(out) = D-glucose(in). It catalyses the reaction D-fructose(out) = D-fructose(in). It carries out the reaction L-dehydroascorbate(out) = L-dehydroascorbate(in). The catalysed reaction is alpha,alpha-trehalose(in) = alpha,alpha-trehalose(out). With respect to regulation, inhibited by cytochalasin B. In terms of biological role, insulin-regulated facilitative hexose transporter that mediates the transport of glucose and fructose. Facilitates hepatic influx of dietary trehalose, which in turn inhibits glucose and fructose influx triggering a starvation signal and hepatic autophagy through activation of AMPK and ULK1. Also able to mediate the transport of dehydroascorbate. The protein is Solute carrier family 2, facilitated glucose transporter member 8 of Mus musculus (Mouse).